The following is a 335-amino-acid chain: MQNIFNKIYESKSLNQEESYQLFKSIALGKINEIQLSSILTAMQMHGESEKEILGAIYAFSERMKFFPRPNYIFSDIVGTGGDSKNTINVSTSSAFVAASCGFKIIKHCNKGVSSKSGSSDLLNKFKINLNTSLENSKKILDKLNICFLFAPKYHSVFKYASKTRSILKIKTIFNLLGPFLNPSRPPLTLIGVYKKDLVNPMSRILKKLKYQRGIILHGDDTDEVTLHGTTYISELLNNKIYSYELEPEDFGIKRHSKSIFVEYSPEENYHIIKKTMQGKGEKLHEELIAVNVALLLKIFGHENLKENTKIALKKIRSGDVYKHIMQVSNMLKED.

Residues G79, 82 to 83, T87, 89 to 92, 107 to 115, and S119 contribute to the 5-phospho-alpha-D-ribose 1-diphosphate site; these read GD, NVST, and KHCNKGVSS. G79 is an anthranilate binding site. Residue S91 coordinates Mg(2+). N110 provides a ligand contact to anthranilate. R165 provides a ligand contact to anthranilate. Mg(2+)-binding residues include D223 and E224.

Belongs to the anthranilate phosphoribosyltransferase family. As to quaternary structure, homodimer. It depends on Mg(2+) as a cofactor.

The enzyme catalyses N-(5-phospho-beta-D-ribosyl)anthranilate + diphosphate = 5-phospho-alpha-D-ribose 1-diphosphate + anthranilate. Its pathway is amino-acid biosynthesis; L-tryptophan biosynthesis; L-tryptophan from chorismate: step 2/5. Catalyzes the transfer of the phosphoribosyl group of 5-phosphorylribose-1-pyrophosphate (PRPP) to anthranilate to yield N-(5'-phosphoribosyl)-anthranilate (PRA). The sequence is that of Anthranilate phosphoribosyltransferase from Buchnera aphidicola subsp. Schizaphis graminum (strain Sg).